A 74-amino-acid chain; its full sequence is Control protein C.MunI (74 aa).

The 56-residue stretch at 12–67 folds into the HTH cro/C1-type domain; it reads LKKLRKEKTDLSQESFAAQIDLDRTYYSSIENGKRNVSLVNLEKISAGLGITLSEL. The segment at residues 23-42 is a DNA-binding region (H-T-H motif); that stretch reads SQESFAAQIDLDRTYYSSIE.

In terms of biological role, probably controls expression of its associated restriction-modification system MunI. This is Control protein C.MunI from Mycoplasma sp.